Consider the following 178-residue polypeptide: GTP-dependent dephospho-CoA kinase (178 aa).

Positions 55, 57, 74, 76, and 127 each coordinate GTP.

The protein belongs to the GTP-dependent DPCK family.

It catalyses the reaction 3'-dephospho-CoA + GTP = GDP + CoA + H(+). It functions in the pathway cofactor biosynthesis; coenzyme A biosynthesis. In terms of biological role, catalyzes the GTP-dependent phosphorylation of the 3'-hydroxyl group of dephosphocoenzyme A to form coenzyme A (CoA). The sequence is that of GTP-dependent dephospho-CoA kinase from Saccharolobus islandicus (strain Y.G.57.14 / Yellowstone #1) (Sulfolobus islandicus).